Here is a 364-residue protein sequence, read N- to C-terminus: Nucleoporin SEH1 (364 aa).

WD repeat units follow at residues 10-49 (DHKD…EWNC), 55-96 (THSG…SNDK), 111-152 (DSRT…NLSQ), 160-210 (SCKL…RKYA), 217-258 (TVTD…KESS), and 275-314 (GHNS…NWKC). The interval 326-364 (NGAAGQAGTPGAAGTPGGPASQNALQAVAGRKKAQLMPG) is disordered. Over residues 327–338 (GAAGQAGTPGAA) the composition is skewed to low complexity. Basic residues predominate over residues 355–364 (GRKKAQLMPG).

Belongs to the WD repeat SEC13 family. Component of the Nup107-160 subcomplex of the nuclear pore complex (NPC). The Nup107-160 subcomplex includes NUP160, NUP133, NUP107, NUP98, NUP85, NUP43, NUP37, SEH1 and SEC13. Component of the GATOR2 subcomplex, composed of MIOS, SEC13, SEH1L, WDR24 and WDR59. The GATOR2 complex interacts with CASTOR1 and CASTOR2; the interaction is negatively regulated by arginine. The GATOR2 complex interacts with SESN1, SESN2 and SESN3; the interaction is negatively regulated by amino acids.

Its subcellular location is the chromosome. It is found in the centromere. The protein resides in the kinetochore. It localises to the nucleus. The protein localises to the nuclear pore complex. Its subcellular location is the lysosome membrane. Its activity is regulated as follows. The GATOR2 complex is negatively regulated by the upstream amino acid sensors CASTOR1 and SESN2, which sequester the GATOR2 complex in absence of amino acids. In the presence of abundant amino acids, GATOR2 is released from CASTOR1 and SESN2 and activated. Its function is as follows. Component of the Nup107-160 subcomplex of the nuclear pore complex (NPC). The Nup107-160 subcomplex is required for the assembly of a functional NPC. The Nup107-160 subcomplex is also required for normal kinetochore microtubule attachment, mitotic progression and chromosome segregation. This subunit plays a role in recruitment of the Nup107-160 subcomplex to the kinetochore. Functionally, as a component of the GATOR2 complex, functions as an activator of the amino acid-sensing branch of the mTORC1 signaling pathway. The GATOR2 complex indirectly activates mTORC1 through the inhibition of the GATOR1 subcomplex. GATOR2 probably acts as an E3 ubiquitin-protein ligase toward GATOR1. In the presence of abundant amino acids, the GATOR2 complex mediates ubiquitination of the NPRL2 core component of the GATOR1 complex, leading to GATOR1 inactivation. In the absence of amino acids, GATOR2 is inhibited, activating the GATOR1 complex. The chain is Nucleoporin SEH1 (seh1l) from Osmerus mordax (Rainbow smelt).